The sequence spans 430 residues: Cysteate synthase (430 aa).

K106 carries the post-translational modification N6-(pyridoxal phosphate)lysine. Positions 132 and 381 each coordinate pyridoxal 5'-phosphate.

Belongs to the threonine synthase family. Cysteate synthase subfamily. In terms of assembly, homotrimer. Pyridoxal 5'-phosphate is required as a cofactor.

It catalyses the reaction O-phospho-L-serine + sulfite + H(+) = L-cysteate + phosphate. Its pathway is cofactor biosynthesis; coenzyme M biosynthesis. Its function is as follows. Specifically catalyzes the beta-elimination of phosphate from L-phosphoserine and the beta-addition of sulfite to the dehydroalanine intermediate to produce L-cysteate. This is Cysteate synthase from Methanoculleus marisnigri (strain ATCC 35101 / DSM 1498 / JR1).